The following is a 164-amino-acid chain: Urocortin-3 (164 aa).

Residues 1-23 (MLMPTYFLLPLLLLLGGPRTSLS) form the signal peptide. A propeptide spanning residues 24–121 (HKFYNTGPVF…PDKPKSDRGT (98 aa)) is cleaved from the precursor. Residues 58-120 (SFGHLPTQDP…YPDKPKSDRG (63 aa)) are disordered. Basic and acidic residues predominate over residues 110 to 120 (LYPDKPKSDRG). An Isoleucine amide modification is found at I160.

The protein belongs to the sauvagine/corticotropin-releasing factor/urotensin I family. As to quaternary structure, binds with high affinity to CRF receptors 2-alpha and 2-beta. Expressed in some areas of the brain including the hypothalamus, amygdala, and brainstem, but is not evident in the cerebellum, pituitary, or cerebral cortex; it is also expressed peripherally in small intestine and skin.

Its subcellular location is the secreted. Its function is as follows. Suppresses food intake, delays gastric emptying and decreases heat-induced edema. Might represent an endogenous ligand for maintaining homeostasis after stress. This chain is Urocortin-3 (Ucn3), found in Mus musculus (Mouse).